The sequence spans 280 residues: Cell division control protein 2 homolog B (280 aa).

Residues 1 to 5 and lysine 20 each bind ATP; that span reads AYGVV. The Protein kinase domain occupies 1–274; it reads AYGVVYKARD…AKKALEHEYF (274 aa). Position 2 is a phosphotyrosine (tyrosine 2). The active-site Proton acceptor is aspartate 114. Threonine 148 bears the Phosphothreonine; by CAK mark.

It belongs to the protein kinase superfamily. CMGC Ser/Thr protein kinase family. CDC2/CDKX subfamily.

The catalysed reaction is L-seryl-[protein] + ATP = O-phospho-L-seryl-[protein] + ADP + H(+). The enzyme catalyses L-threonyl-[protein] + ATP = O-phospho-L-threonyl-[protein] + ADP + H(+). It carries out the reaction [DNA-directed RNA polymerase] + ATP = phospho-[DNA-directed RNA polymerase] + ADP + H(+). Its activity is regulated as follows. Phosphorylation at Tyr-2 inactivates the enzyme, while phosphorylation at Thr-148 activates it. Its function is as follows. Plays a key role in the control of the eukaryotic cell cycle. The protein is Cell division control protein 2 homolog B (CDC2B) of Antirrhinum majus (Garden snapdragon).